We begin with the raw amino-acid sequence, 649 residues long: Stress-70 protein, mitochondrial (649 aa).

The transit peptide at 1–46 directs the protein to the mitochondrion; sequence MISASRAAAARLVGAAASRGPTAARHKDGWNGLSHEAFRIVSRRDY. The interval 1–432 is interaction with NFS1; sequence MISASRAAAA…IQGGVLAGDV (432 aa). Positions 63 and 64 each coordinate ADP. Positions 63 to 431 are nucleotide-binding domain (NBD); sequence TNSCVAVMEG…AIQGGVLAGD (369 aa). Lysine 76 carries the post-translational modification N6-acetyllysine. A Phosphothreonine modification is found at threonine 87. Residues lysine 135 and lysine 138 each carry the N6-acetyllysine; alternate modification. 2 positions are modified to N6-succinyllysine; alternate: lysine 135 and lysine 138. Position 143 is an N6-acetyllysine (lysine 143). Position 206 is an N6-acetyllysine; alternate (lysine 206). Position 206 is an N6-succinyllysine; alternate (lysine 206). Lysine 206 carries the post-translational modification N6-malonyllysine; alternate. N6-acetyllysine is present on residues lysine 234 and lysine 288. Position 300 is an N6-acetyllysine; alternate (lysine 300). N6-succinyllysine; alternate is present on lysine 300. Residues glutamate 313, lysine 316, and serine 320 each coordinate ADP. Lysine 368 is subject to N6-succinyllysine. 2 residues coordinate ADP: glycine 388 and arginine 391. Lysine 394 bears the N6-succinyllysine mark. Serine 408 carries the post-translational modification Phosphoserine. The segment at 432–441 is interdomain linker; that stretch reads VTDVLLLDVT. An N6-acetyllysine; alternate mark is found at lysine 565, lysine 598, and lysine 638. N6-succinyllysine; alternate occurs at positions 565, 598, and 638.

It belongs to the heat shock protein 70 family. In terms of assembly, interacts strongly with the intermediate form of FXN and weakly with its mature form. Interacts with HSCB. Associates with the mitochondrial contact site and cristae organizing system (MICOS) complex, composed of at least MICOS10/MIC10, CHCHD3/MIC19, CHCHD6/MIC25, APOOL/MIC27, IMMT/MIC60, APOO/MIC23/MIC26 and QIL1/MIC13. This complex was also known under the names MINOS or MitOS complex. The MICOS complex associates with mitochondrial outer membrane proteins SAMM50, MTX1, MTX2 and DNAJC11, mitochondrial inner membrane protein TMEM11 and with HSPA9. Interacts with DNLZ, the interaction is required to prevent self-aggregation. Interacts with TESPA1. Interacts with PDPN. Interacts with NFU1, NFS1 and ISCU. Interacts with TP53; the interaction promotes TP53 degradation. Interacts (via SBD domain) with UBXN2A; the interaction with UBXN2A inhibits HSPA9/MOT-2 interaction with and degradation of TP53, thereby promotes TP53 translocation to the nucleus. Interacts with ITPR1 AND VDAC1; this interaction couples ITPR1 to VDAC1. Component of the TIM23 mitochondrial inner membrane pre-sequence translocase complex.

Its subcellular location is the mitochondrion. The protein resides in the nucleus. It is found in the nucleolus. The protein localises to the cytoplasm. It localises to the mitochondrion matrix. It catalyses the reaction ATP + H2O = ADP + phosphate + H(+). With respect to regulation, the chaperone activity is regulated by ATP-induced allosteric coupling of the nucleotide-binding (NBD) and substrate-binding (SBD) domains. ATP binding in the NBD leads to a conformational change in the NBD, which is transferred through the interdomain linker (IDL) to the substrate-binding domain (SBD). This elicits a reduced substrate affinity and a faster substrate exchange rate. Upon hydrolysis of ATP to ADP, the protein undergoes a conformational change that increases its affinity for substrate proteins. It cycles through repeated phases of ATP hydrolysis and nucleotide exchange, facilitating repeated cycles of substrate binding and release. Functions in collaboration with co-chaperones. Functions with the co-chaperone, DNLZ, to maintain solubility and regulate ATP hydrolysis. Nucleotide exchange factors, GRPEL1 and GRPEL2, accelerate nucleotide exchange. Mitochondrial chaperone that plays a key role in mitochondrial protein import, folding, and assembly. Plays an essential role in the protein quality control system, the correct folding of proteins, the re-folding of misfolded proteins, and the targeting of proteins for subsequent degradation. These processes are achieved through cycles of ATP binding, ATP hydrolysis, and ADP release, mediated by co-chaperones. In mitochondria, it associates with the TIM (translocase of the inner membrane) protein complex to assist in the import and folding of mitochondrial proteins. Plays an important role in mitochondrial iron-sulfur cluster (ISC) biogenesis, interacts with and stabilizes ISC cluster assembly proteins FXN, NFU1, NFS1 and ISCU. Regulates erythropoiesis via stabilization of ISC assembly. Regulates mitochondrial calcium-dependent apoptosis by coupling two calcium channels, ITPR1 and VDAC1, at the mitochondria-associated endoplasmic reticulum (ER) membrane to facilitate calcium transport from the ER lumen to the mitochondria intermembrane space, providing calcium for the downstream calcium channel MCU, which releases it into the mitochondrial matrix. Although primarily located in the mitochondria, it is also found in other cellular compartments. In the cytosol, it associates with proteins involved in signaling, apoptosis, or senescence. It may play a role in cell cycle regulation via its interaction with and promotion of degradation of TP53. May play a role in the control of cell proliferation and cellular aging. Protects against reactive oxygen species (ROS). Extracellular HSPA9 plays a cytoprotective role by preventing cell lysis following immune attack by the membrane attack complex by disrupting formation of the complex. This Canis lupus familiaris (Dog) protein is Stress-70 protein, mitochondrial.